A 219-amino-acid chain; its full sequence is ATP-dependent Clp protease proteolytic subunit (219 aa).

Ser-101 acts as the Nucleophile in catalysis. His-126 is an active-site residue.

It belongs to the peptidase S14 family. As to quaternary structure, component of the chloroplastic Clp protease core complex.

It is found in the plastid. Its subcellular location is the chloroplast stroma. The enzyme catalyses Hydrolysis of proteins to small peptides in the presence of ATP and magnesium. alpha-casein is the usual test substrate. In the absence of ATP, only oligopeptides shorter than five residues are hydrolyzed (such as succinyl-Leu-Tyr-|-NHMec, and Leu-Tyr-Leu-|-Tyr-Trp, in which cleavage of the -Tyr-|-Leu- and -Tyr-|-Trp bonds also occurs).. Cleaves peptides in various proteins in a process that requires ATP hydrolysis. Has a chymotrypsin-like activity. Plays a major role in the degradation of misfolded proteins. The chain is ATP-dependent Clp protease proteolytic subunit from Chara vulgaris (Common stonewort).